The primary structure comprises 140 residues: MSKRGRGGTAGGKFRISLGLPVGAVMNCADNTGAKNLYVIAVHGIRGRLNRLPAAGVGDMFVATVKKGKPELRKKVMPAVVIRQRKPFRRRDGVFIYFEDNAGVIVNNKGEMKGSAITGPVAKECADLWPRIASNASSIA.

This sequence belongs to the universal ribosomal protein uL14 family.

The chain is Large ribosomal subunit protein uL14 (RpL23) from Drosophila melanogaster (Fruit fly).